The chain runs to 580 residues: Thymidine kinase (580 aa).

Disordered stretches follow at residues 1-60 (MAEG…KSVK) and 133-157 (VCGR…ASMG). The segment covering 137 to 149 (PPLPPPNHPPPAT) has biased composition (pro residues). 260–267 (GVMGVGKS) is a binding site for ATP. Glutamate 287 acts as the Proton acceptor in catalysis. Glutamine 325 serves as a coordination point for substrate. An ATP-binding site is contributed by arginine 415. Arginine 421 is a binding site for substrate.

Belongs to the herpesviridae thymidine kinase family. In terms of assembly, homodimer.

The enzyme catalyses thymidine + ATP = dTMP + ADP + H(+). Functionally, catalyzes the transfer of the gamma-phospho group of ATP to thymidine to generate dTMP in the salvage pathway of pyrimidine synthesis. The dTMP serves as a substrate for DNA polymerase during viral DNA replication. Allows the virus to be reactivated and to grow in non-proliferative cells lacking a high concentration of phosphorylated nucleic acid precursors. The sequence is that of Thymidine kinase from Human herpesvirus 8 type P (isolate GK18) (HHV-8).